The sequence spans 98 residues: UPF0251 protein SO_0727 (98 aa).

Belongs to the UPF0251 family.

This Shewanella oneidensis (strain ATCC 700550 / JCM 31522 / CIP 106686 / LMG 19005 / NCIMB 14063 / MR-1) protein is UPF0251 protein SO_0727.